A 134-amino-acid chain; its full sequence is MTSTVELTKENFDQTVTDNEFVLIDFWAEWCGPCKQFGPVYEKAAEANPDLVFGKVDTEAQPELAQAFGISSIPTLMIVREQVAVFAQPGALPEAALTDVIGQARKLDMDEVRKAVAEQQAQAGQNGQEGQEGQ.

The Thioredoxin domain maps to 3 to 106; sequence STVELTKENF…LTDVIGQARK (104 aa). C31 and C34 are oxidised to a cystine. Positions 115-134 are disordered; the sequence is AVAEQQAQAGQNGQEGQEGQ. Residues 117-134 are compositionally biased toward low complexity; the sequence is AEQQAQAGQNGQEGQEGQ.

This sequence belongs to the thioredoxin family.

It is found in the cytoplasm. Its function is as follows. Component of the thioredoxin-thioredoxin reductase system. Participates in various redox reactions through the reversible oxidation of its active center dithiol to a disulfide and catalyzes dithiol-disulfide exchange reactions. This is Putative thioredoxin 2 (trxC) from Streptomyces coelicolor (strain ATCC BAA-471 / A3(2) / M145).